A 1311-amino-acid polypeptide reads, in one-letter code: Zinc finger protein 521 (1311 aa).

The C2H2-type 1; degenerate zinc-finger motif lies at 47–67 (HSCDSCLQVFESLSDITEHKI). Residues 81–108 (DPSCSWPASSPSSKDQTSPSHGEGCDFG) are disordered. Over residues 83 to 102 (SCSWPASSPSSKDQTSPSHG) the composition is skewed to low complexity. 7 consecutive C2H2-type zinc fingers follow at residues 118 to 140 (YPCQ…EQSH), 146 to 168 (FKCT…IKLH), 174 to 196 (YHCS…LKTH), 202 to 224 (YKCA…MQVH), 246 to 269 (QKCS…AECH), 281 to 304 (LQCM…EQVH), and 310 to 332 (NSCS…MDSH). Residues 357-398 (TTPDSNLSVDSSTMVEAAPPIPKSRGRKRAAQQTSDMTGPSS) are disordered. Polar residues-rich tracts occupy residues 359–370 (PDSNLSVDSSTM) and 387–398 (AQQTSDMTGPSS). Residues 405 to 429 (YSCIYCNKQLFSSLAVLQIHLKTMH) form a C2H2-type 9; degenerate zinc finger. 3 consecutive C2H2-type zinc fingers follow at residues 437-460 (HICQ…KQVH), 477-500 (YQCN…RCSH), and 513-536 (FFCP…RQVH). Serine 546 carries the phosphoserine modification. A C2H2-type 13; atypical zinc finger spans residues 560–585 (YSCSYCTNSPIFNSVLKLNKHIKENH). Phosphoserine occurs at positions 605 and 608. 7 consecutive C2H2-type zinc fingers follow at residues 634–656 (YICN…LKTH), 664–686 (LTCP…VTIH), 694–717 (YICE…LDMH), 722–745 (FRCT…AVKH), 752–775 (YRCT…KHNH), 783–805 (HKCI…ITTH), and 809–832 (YNCR…REKH). Residues 863 to 883 (TNSQESHNSHDGSEEDVDSSE) form a disordered region. A C2H2-type 21; degenerate zinc finger spans residues 886-908 (YGCDICGAAYTMETLLQNHQLRD). 3 consecutive C2H2-type zinc fingers follow at residues 930-952 (YKCN…MQTH), 959-981 (YMCP…KVTH), and 1020-1042 (FRCV…GTFH). The C2H2-type 25; degenerate zinc finger occupies 1065–1083 (YKCASCLKEFRSKQDLVKL). Low complexity predominate over residues 1105 to 1119 (PGLSLPPGASRPGLG). The disordered stretch occupies residues 1105 to 1136 (PGLSLPPGASRPGLGQNESLSAMEGKGKAGGL). 5 consecutive C2H2-type zinc fingers follow at residues 1138–1161 (TRCS…QTVH), 1195–1217 (YQCI…VANH), 1225–1247 (HECK…LIEH), 1256–1279 (FKCP…FSAH), and 1286–1309 (YDCT…MTQH). Residue lysine 1146 forms a Glycyl lysine isopeptide (Lys-Gly) (interchain with G-Cter in SUMO2) linkage.

Belongs to the krueppel C2H2-type zinc-finger protein family. As to quaternary structure, interacts with EBF1. Interacts with SMAD1 and SMAD4. Widely expressed. Expressed in all B-cell stages.

The protein resides in the nucleus. In terms of biological role, transcription factor that can both act as an activator or a repressor depending on the context. Involved in BMP signaling and in the regulation of the immature compartment of the hematopoietic system. Associates with SMADs in response to BMP2 leading to activate transcription of BMP target genes. Acts as a transcriptional repressor via its interaction with EBF1, a transcription factor involved specification of B-cell lineage; this interaction preventing EBF1 to bind DNA and activate target genes. The sequence is that of Zinc finger protein 521 (Znf521) from Mus musculus (Mouse).